The sequence spans 239 residues: MRIERVDDTTVKLFITYSDIEARGFSREDLWTNRKRGEEFFWSMMDEINEEEDFVVEGPLWIQVHAFEKGVEVTISKSKNEDMMNMSDDDATDQFDEQVQELLAQTLEGEDQLEELFEQRTKEKEAQGSKRQKSSARKNTRTIIVKFNDLEDVINYAYHSNPITTEFEDLLYMVDGTYYYAVYFDSHVDQEVINDSYSQLLEFAYPTDRTEVYLNDYAKIIMSHNVTAQVRRYFPETTE.

Residues 118 to 128 (EQRTKEKEAQG) are compositionally biased toward basic and acidic residues. The tract at residues 118 to 137 (EQRTKEKEAQGSKRQKSSAR) is disordered.

The protein belongs to the MecA family. In terms of assembly, homodimer.

Enables the recognition and targeting of unfolded and aggregated proteins to the ClpC protease or to other proteins involved in proteolysis. The protein is Adapter protein MecA of Staphylococcus aureus (strain USA300).